Consider the following 491-residue polypeptide: Maintenance of mitochondrial morphology protein 1 (491 aa).

Residues 1-22 lie on the Lumenal side of the membrane; sequence MTFQQNEPSAVPAQSSLSFTQG. The helical transmembrane segment at 23 to 43 threads the bilayer; the sequence is FLLGQLSVVLLIGAFIKFFIF. The Cytoplasmic portion of the chain corresponds to 44–491; the sequence is GEAPPPPSRG…GTLPGGAAAN (448 aa). Disordered stretches follow at residues 50–95, 275–325, and 392–491; these read PSRG…PVPS, PPLH…SPKS, and RTGV…AAAN. Basic residues predominate over residues 54-64; the sequence is LSHRASTHRRS. Composition is skewed to polar residues over residues 65-78 and 85-95; these read NSIYTINPNEGTSR and STSNVLRPVPS. Positions 131 to 384 constitute an SMP-LTD domain; it reads QPESLDWFNV…EPRVQVVGLP (254 aa). The segment covering 275–287 has biased composition (pro residues); sequence PPLHTPSPSPSPP. 2 stretches are compositionally biased toward polar residues: residues 300–315 and 403–412; these read TNGSREPTQEAPNAQE and TGSNAASRSA. Basic and acidic residues predominate over residues 422–434; the sequence is RADDIGREPDGLR.

Belongs to the MMM1 family. Homodimer. Component of the ER-mitochondria encounter structure (ERMES) or MDM complex, composed of mmm1, mdm10, mdm12 and mdm34. A mmm1 homodimer associates with one molecule of mdm12 on each side in a pairwise head-to-tail manner, and the SMP-LTD domains of mmm1 and mdm12 generate a continuous hydrophobic tunnel for phospholipid trafficking.

It is found in the endoplasmic reticulum membrane. Its function is as follows. Component of the ERMES/MDM complex, which serves as a molecular tether to connect the endoplasmic reticulum (ER) and mitochondria. Components of this complex are involved in the control of mitochondrial shape and protein biogenesis, and function in nonvesicular lipid trafficking between the ER and mitochondria. The mdm12-mmm1 subcomplex functions in the major beta-barrel assembly pathway that is responsible for biogenesis of all outer membrane beta-barrel proteins, and acts in a late step after the SAM complex. The mdm10-mdm12-mmm1 subcomplex further acts in the TOM40-specific pathway after the action of the mdm12-mmm1 complex. Essential for establishing and maintaining the structure of mitochondria and maintenance of mtDNA nucleoids. The protein is Maintenance of mitochondrial morphology protein 1 of Aspergillus flavus (strain ATCC 200026 / FGSC A1120 / IAM 13836 / NRRL 3357 / JCM 12722 / SRRC 167).